Consider the following 670-residue polypeptide: Zinc finger protein 526 (670 aa).

3 C2H2-type zinc fingers span residues 57–79, 108–130, and 140–163; these read FMCSECGSLYNTLEEVLSHQEQH, FQCGECSQLILSPGELLAHQDAH, and YQCWDCQELFPSPELWVAHRKAQH. 2 disordered regions span residues 168–196 and 217–304; these read VAEPPVPPPLPPPTPLPPPSPPSEVKMEP and GTHF…ATHP. Residues 171-189 are compositionally biased toward pro residues; the sequence is PPVPPPLPPPTPLPPPSPP. The C2H2-type 4 zinc-finger motif lies at 197–219; the sequence is YECPECSTLCATPEEFLEHQGTH. Over residues 217 to 231 the composition is skewed to basic and acidic residues; the sequence is GTHFDSLEKEERNGL. Residues 232 to 263 show a composition bias toward acidic residues; that stretch reads EEEEEDDEEDEEDDEEMEDEEAMAEVGDDAVG. C2H2-type zinc fingers lie at residues 305–327, 332–354, 360–382, 388–409, 442–465, 472–494, 500–522, 528–550, and 573–595; these read FHCSQCQRSFSSANRLQAHGRAH, HECTTCSKVFKKAASLEQHLRLH, YLCVDCGRGFGTELTLVAHRRAH, HRCRCGKTFSNMTKFLYHRRTH, LPCPQCSKSFASASRLSRHRRAVH, HRCGVCGKGFKKLIHVRNHLRTH, FQCHSCGKTFASLANLSRHQLTH, YQCLDCGKRFTQSSNLQQHRRLH, and YYCGTCGRWFRAMAGLRLHQRVH. A disordered region spans residues 409 to 443; it reads HAGKSGAPPTGATAPPAPAEPTPPPPPPAPPAQLP. Pro residues predominate over residues 423-442; the sequence is PPAPAEPTPPPPPPAPPAQL. The interval 601–621 is disordered; sequence LTLQPPRSPSPAPPPPPEPQQ. Residues 606 to 619 show a composition bias toward pro residues; sequence PRSPSPAPPPPPEP.

The protein belongs to the krueppel C2H2-type zinc-finger protein family. As to expression, widely expressed.

It is found in the nucleus. May be involved in transcriptional regulation. The protein is Zinc finger protein 526 (ZNF526) of Homo sapiens (Human).